A 554-amino-acid chain; its full sequence is Glucose-6-phosphate isomerase 1 (554 aa).

The active-site Proton donor is E359. Catalysis depends on residues H390 and K518.

The protein belongs to the GPI family.

It localises to the cytoplasm. It carries out the reaction alpha-D-glucose 6-phosphate = beta-D-fructose 6-phosphate. It participates in carbohydrate biosynthesis; gluconeogenesis. Its pathway is carbohydrate degradation; glycolysis; D-glyceraldehyde 3-phosphate and glycerone phosphate from D-glucose: step 2/4. Functionally, catalyzes the reversible isomerization of glucose-6-phosphate to fructose-6-phosphate. The polypeptide is Glucose-6-phosphate isomerase 1 (Pseudomonas putida (strain ATCC 47054 / DSM 6125 / CFBP 8728 / NCIMB 11950 / KT2440)).